Here is a 1720-residue protein sequence, read N- to C-terminus: 6-methylcalicylic acide synthase (1720 aa).

Residues 1-31 (MDKQSASGEIPAMRWEPYHRRDPRNAKELSK) form a disordered region. Residues 1-399 (MDKQSASGEI…GTVSHAVIEQ (399 aa)) enclose the Ketosynthase family 3 (KS3) domain. Residues 16 to 30 (EPYHRRDPRNAKELS) show a composition bias toward basic and acidic residues. Active-site for beta-ketoacyl synthase activity residues include Cys146, His281, and His321. Residues 509 to 823 (VWVFSGHGAQ…IAQLHCRGAE (315 aa)) form a malonyl-CoA:ACP transacylase (MAT) domain region. The N-terminal hotdog fold stretch occupies residues 868–987 (HTLLGQRIGI…AYWARDIQEA (120 aa)). The segment at 868–1139 (HTLLGQRIGI…FTAMRFSEIE (272 aa)) is dehydratase (DH) domain. One can recognise a PKS/mFAS DH domain in the interval 868–1144 (HTLLGQRIGI…FSEIEGTPGV (277 aa)). The Proton acceptor; for dehydratase activity role is filled by His900. Residues 1001–1144 (GTRIRDDFSI…FSEIEGTPGV (144 aa)) form a C-terminal hotdog fold region. The Proton donor; for dehydratase activity role is filled by Asp1065. Residues 1148–1545 (MESLVHQLAW…AVAVQWTSWR (398 aa)) are product template (PT) domain. The Carrier domain maps to 1644–1718 (VYLDEKIRGC…HLVGWFAEKV (75 aa)). Ser1678 carries the post-translational modification O-(pantetheine 4'-phosphoryl)serine.

The protein localises to the cytoplasm. The protein resides in the cytosol. It carries out the reaction 3 malonyl-CoA + acetyl-CoA + NADPH + 3 H(+) = 6-methylsalicylate + 3 CO2 + NADP(+) + 4 CoA + H2O. Its pathway is mycotoxin biosynthesis; patulin biosynthesis. 6-methylsalicylic acid synthase; part of the gene cluster that mediates the biosynthesis of patulin, an acetate-derived tetraketide mycotoxin produced by several fungal species that shows antimicrobial properties against several bacteria. PatK catalyzes the first step of the pathway which is the synthesis of 6-methylsalicylic acid via condensation of 1 acetate and 3 malonate units. The pathway begins with the synthesis of 6-methylsalicylic acid by the polyketide synthase (PKS) patK via condensation of acetate and malonate units. The 6-methylsalicylic acid decarboxylase patG then catalyzes the decarboxylation of 6-methylsalicylic acid to yield m-cresol (also known as 3-methylphenol). These first reactions occur in the cytosol. The intermediate m-cresol is then transported into the endoplasmic reticulum where the cytochrome P450 monooxygenase patH converts it to m-hydroxybenzyl alcohol, which is further converted to gentisyl alcohol by the cytochrome P450 monooxygenase patI. The oxidoreductases patJ and patO further convert gentisyl alcohol to isoepoxydon in the vacuole. PatN catalyzes then the transformation of isoepoxydon into phyllostine. The cluster protein patF is responsible for the conversion from phyllostine to neopatulin whereas the alcohol dehydrogenase patD converts neopatulin to E-ascladiol. The steps between isoepoxydon and E-ascladiol occur in the cytosol, and E-ascladiol is probably secreted to the extracellular space by one of the cluster-specific transporters patC or patM. Finally, the secreted patulin synthase patE catalyzes the conversion of E-ascladiol to patulin. The chain is 6-methylcalicylic acide synthase from Aspergillus clavatus (strain ATCC 1007 / CBS 513.65 / DSM 816 / NCTC 3887 / NRRL 1 / QM 1276 / 107).